The following is a 344-amino-acid chain: MSAENSRSEALLPLRNLWNSVKCSRDRVRDGESNDSSGTFSLANFWEILNEAVKAVSQEATKLSLMFSKPPLPSDEDCAKMGECVQKSVLTLCTVYFWLPKSQGVTLRRSVRDATAEVLEGLVQLLDVILSSPGQSLSQEQLTSTGSVWAACDHFDQIPKDNRSAVLAVLSSCVGLVKDALEEMQQALAESQDPFGDVLDDDDDDEGGRGNQDRYWSASDRQLIGQCEGLLKASAASLRKLSSAVRHNAQLETEQEIAQLDDLADAAAHVSPCVDDLALSLYPPVDRAAVEQNVCRLAAVLKKLLDITRSSHVCAEADVSWVEFLSGAVEHNLEKVRSLLRSDS.

The interval 191–215 (SQDPFGDVLDDDDDDEGGRGNQDRY) is disordered.

This sequence belongs to the CCNDBP1 family.

The protein localises to the cytoplasm. It localises to the nucleus. Its function is as follows. May negatively regulate cell cycle progression. This chain is Cyclin-D1-binding protein 1 homolog (ccndbp1), found in Danio rerio (Zebrafish).